Here is a 178-residue protein sequence, read N- to C-terminus: Neuroblastoma suppressor of tumorigenicity 1 (178 aa).

An N-terminal signal peptide occupies residues 1-16 (MLWVLVGTVLPVMLLA). Intrachain disulfides connect C34–C84, C48–C98, C58–C117, C62–C119, and C81–C122. Residues 34 to 123 (CEAKNITQIV…IVHCSCQACG (90 aa)) form the CTCK domain. A disordered region spans residues 130–178 (GLNVYMQGEDGPGSQPGSHSHSHPHPGCQTPEPEEPPGAPQVEEEGAED).

This sequence belongs to the DAN family. As to quaternary structure, homodimer. In terms of tissue distribution, most abundant in lung, brain, intestine and kidney.

It localises to the secreted. In terms of biological role, possible candidate as a tumor suppressor gene of neuroblastoma. May play an important role in preventing cells from entering the final stage (G1/S) of the transformation process. The polypeptide is Neuroblastoma suppressor of tumorigenicity 1 (Nbl1) (Rattus norvegicus (Rat)).